The chain runs to 434 residues: Protein trichome birefringence-like 3 (434 aa).

The helical; Signal-anchor for type II membrane protein transmembrane segment at 15 to 35 (IPLSIIVLVLCGFMFFILLYT) threads the bilayer. The short motif at 166–168 (GDS) is the GDS motif element. The DCXHWCLPGXXDXWN motif motif lies at 413 to 427 (DCIHWCLPGLPDTWN).

Belongs to the PC-esterase family. TBL subfamily.

It localises to the golgi apparatus membrane. Involved in secondary cell wall cellulose deposition. Required for normal stem development. May act as a bridging protein that binds pectin and other cell wall polysaccharides. Probably involved in maintaining esterification of pectins. May be involved in the specific O-acetylation of cell wall polymers. The protein is Protein trichome birefringence-like 3 (TBL3) of Arabidopsis thaliana (Mouse-ear cress).